Reading from the N-terminus, the 127-residue chain is Small ribosomal subunit protein bS6 (127 aa).

The interval 102 to 127 is disordered; sequence IMQGAEKGKSSRKEKVDAEAEASEEA. A compositionally biased stretch (basic and acidic residues) spans 107-119; that stretch reads EKGKSSRKEKVDA.

The protein belongs to the bacterial ribosomal protein bS6 family.

Functionally, binds together with bS18 to 16S ribosomal RNA. The protein is Small ribosomal subunit protein bS6 of Coxiella burnetii (strain CbuK_Q154) (Coxiella burnetii (strain Q154)).